Here is a 282-residue protein sequence, read N- to C-terminus: Succinate dehydrogenase [ubiquinone] iron-sulfur subunit, mitochondrial (282 aa).

A mitochondrion-targeting transit peptide spans 1–30 (MAATVGVSLKRGFPAAVLGRVGLQFQACRG). In terms of domain architecture, 2Fe-2S ferredoxin-type spans 42-135 (KKFAIYRWDP…VSKIYPLPHM (94 aa)). 2 positions are modified to N6-acetyllysine: lysine 53 and lysine 57. The [2Fe-2S] cluster site is built by cysteine 95, cysteine 100, cysteine 103, and cysteine 115. Residues 148–220 (FYAQYKSIEP…PAVLMQAYRW (73 aa)) form an interaction with SDHAF1 region. One can recognise a 4Fe-4S ferredoxin-type domain in the interval 178–208 (DREKLDGLYECILCACCSTSCPSYWWNGDKY). [4Fe-4S] cluster contacts are provided by cysteine 188, cysteine 191, and cysteine 194. Residue cysteine 198 coordinates [3Fe-4S] cluster. Position 203 (tryptophan 203) interacts with a ubiquinone. Residues cysteine 245 and cysteine 251 each coordinate [3Fe-4S] cluster. Residue cysteine 255 participates in [4Fe-4S] cluster binding.

Belongs to the succinate dehydrogenase/fumarate reductase iron-sulfur protein family. As to quaternary structure, component of complex II composed of four subunits: the flavoprotein (FP) SDHA, iron-sulfur protein (IP) SDHB, and a cytochrome b560 composed of SDHC and SDHD. Interacts with SDHAF1; the interaction is required for iron-sulfur cluster incorporation into SDHB. Requires [2Fe-2S] cluster as cofactor. [3Fe-4S] cluster is required as a cofactor. The cofactor is [4Fe-4S] cluster.

Its subcellular location is the mitochondrion inner membrane. It catalyses the reaction a quinone + succinate = fumarate + a quinol. The enzyme catalyses (R)-malate + a quinone = enol-oxaloacetate + a quinol. It carries out the reaction (S)-malate + a quinone = enol-oxaloacetate + a quinol. It functions in the pathway carbohydrate metabolism; tricarboxylic acid cycle; fumarate from succinate (eukaryal route): step 1/1. With respect to regulation, enol-oxaloacetate inhibits the succinate dehydrogenase activity. Its function is as follows. Iron-sulfur protein (IP) subunit of the succinate dehydrogenase complex (mitochondrial respiratory chain complex II), responsible for transferring electrons from succinate to ubiquinone (coenzyme Q). SDH also oxidizes malate to the non-canonical enol form of oxaloacetate, enol-oxaloacetate. Enol-oxaloacetate, which is a potent inhibitor of the succinate dehydrogenase activity, is further isomerized into keto-oxaloacetate. This Mus musculus (Mouse) protein is Succinate dehydrogenase [ubiquinone] iron-sulfur subunit, mitochondrial (Sdhb).